A 146-amino-acid polypeptide reads, in one-letter code: Ubiquitin-conjugating enzyme E2 variant 1D (146 aa).

The UBC core domain maps to 13–146; sequence PRNFRLLEEL…LVQPPEGTCF (134 aa).

This sequence belongs to the ubiquitin-conjugating enzyme family. In terms of assembly, heterodimer with UBC35 or UBC36. As to expression, expressed in roots, shoots, leaves, stems, flowers and pollen.

Functionally, has no ubiquitin ligase activity on its own. The heterodimer with UBC catalyzes the synthesis of non-canonical poly-ubiquitin chains that are linked through 'Lys-63'. This type of poly-ubiquitination does not lead to protein degradation by the proteasome. Mediates transcriptional activation of target genes. May play a role in the control of progress through the cell cycle and differentiation. Involved in the error-free DNA repair pathway and contributes to the survival of cells after DNA damage. This is Ubiquitin-conjugating enzyme E2 variant 1D (UEV1D) from Arabidopsis thaliana (Mouse-ear cress).